The chain runs to 526 residues: Cytochrome P450 monooxygenase 58 (526 aa).

The next 3 membrane-spanning stretches (helical) occupy residues 13-33 (IASSTIGQRILLALALGLLLI), 115-135 (FIMAGEILTGGMLIVFTGYGK), and 306-326 (IGAGAETTAASLSVFMLAMTL). Cys-451 is a heme binding site.

This sequence belongs to the cytochrome P450 family. Heme is required as a cofactor.

It is found in the membrane. Its pathway is secondary metabolite biosynthesis. Functionally, cytochrome P450 monooxygenase that is able to use delta(6)-protoilludene as a substrate to produce delta(6)-protoilludene-8-ol. The chain is Cytochrome P450 monooxygenase 58 from Postia placenta (strain ATCC 44394 / Madison 698-R) (Brown rot fungus).